Consider the following 412-residue polypeptide: Putative disintegrin and metalloproteinase domain-containing protein 5 (412 aa).

One can recognise a Disintegrin domain in the interval 111 to 199 (EKYADTNILL…YCLPDTYVRD (89 aa)). The EGF-like domain maps to 351–385 (NLKLCDASNHCDRHGVCNNFNHCHCEKGYNPPYCQ).

In terms of assembly, interacts with TEX101. As to expression, highly expressed in testis.

Its function is as follows. This is a non catalytic metalloprotease-like protein. In Homo sapiens (Human), this protein is Putative disintegrin and metalloproteinase domain-containing protein 5 (ADAM5).